We begin with the raw amino-acid sequence, 302 residues long: Homoserine O-acetyltransferase (302 aa).

Cys142 acts as the Acyl-thioester intermediate in catalysis. Residues Lys163 and Ser192 each contribute to the substrate site. The active-site Proton acceptor is the His235. Residue Glu237 is part of the active site. Residue Arg249 coordinates substrate.

This sequence belongs to the MetA family.

It localises to the cytoplasm. The enzyme catalyses L-homoserine + acetyl-CoA = O-acetyl-L-homoserine + CoA. It participates in amino-acid biosynthesis; L-methionine biosynthesis via de novo pathway; O-acetyl-L-homoserine from L-homoserine: step 1/1. In terms of biological role, transfers an acetyl group from acetyl-CoA to L-homoserine, forming acetyl-L-homoserine. The polypeptide is Homoserine O-acetyltransferase (Geobacillus kaustophilus (strain HTA426)).